The sequence spans 623 residues: MSSSKKIVILYGSETGNAHDFATILSHRLHRWHFSHTFCSIGDYDPQDILKCRYLFIICSTTGQGELPRNVNALKGERPVTFWSFLKRKNLPSNLLNHIQTAMLGLGDSSYPKFNYGIRKLHQRIVTQLGANELFDRLEADDQAMAGSNKGTGLGIESVYFEYEKKVLSFLLSKYPNRKVNGQIIKREELDPEVYLEPASYLQLSDEHANEKFTSTKVIFEGDESLKVGRVNINKRITSEGHFQDVRQFKFSNVDKIQENYEPGDTVTIYPCNTDEDVSRFLANQSHWLEIADKPLNFTSGVPNDLKDGGLVRPMTLRNLLKYHCDFMSIPRTSFFLKIWTFATDVTKMERGQEQLNDQREKLRQFATDQDMQDLYDYCNRPRRSILEVLEDFISVKLPWKYVLDYLPIIKPRYYSISSGPGDPNIELTVAIVKYKTILRKIRRGICTNYIARLQEGEQIRYKLQNNHIIKKEFLNKPMILVGPGVGLAPLLSVVKAEISKDIKLLFGCRYKDKDYIYKDMLEDWFRKGKIALHSSFSRDEENSPGVKYVQDYLWRLGEEITNLVVNKDAVFFLCGSSGKMPIQVRLTFIEMLKKWGNFSDEETAKKYLKEMEKSDRYIQETW.

Positions 7–168 (IVILYGSETG…VYFEYEKKVL (162 aa)) constitute a Flavodoxin-like domain. Residues 13–18 (SETGNA), 60–63 (STTG), 106–115 (LGDSSYPKFN), and Asp142 contribute to the FMN site. Residues 224-491 (ESLKVGRVNI…VGPGVGLAPL (268 aa)) enclose the FAD-binding FR-type domain. Residues Arg383, 413–416 (RYYS), and 445–448 (GICT) each bind FAD. 538 to 539 (SR) lines the NADP(+) pocket. Residue Trp623 coordinates FAD.

Belongs to the NADPH-dependent diflavin oxidoreductase NDOR1 family. This sequence in the N-terminal section; belongs to the flavodoxin family. The protein in the C-terminal section; belongs to the flavoprotein pyridine nucleotide cytochrome reductase family. In terms of assembly, interacts with DRE2; as part of the cytosolic iron-sulfur (Fe-S) protein assembly (CIA) machinery. The cofactor is FAD. FMN is required as a cofactor.

It localises to the cytoplasm. The protein localises to the mitochondrion. The catalysed reaction is 2 oxidized [2Fe-2S]-[protein] + NADPH = 2 reduced [2Fe-2S]-[protein] + NADP(+) + H(+). In terms of biological role, NADPH-dependent reductase which is a central component of the cytosolic iron-sulfur (Fe-S) protein assembly (CIA) machinery. Transfers electrons from NADPH via its FAD and FMN prosthetic groups to the [2Fe-2S] cluster of DRE2, another key component of the CIA machinery. In turn, this reduced cluster provides electrons for assembly of cytosolic iron-sulfur cluster proteins. Positively controls H(2)O(2)-induced cell death. This Saccharomyces cerevisiae (strain ATCC 204508 / S288c) (Baker's yeast) protein is NADPH-dependent diflavin oxidoreductase 1.